A 217-amino-acid chain; its full sequence is MEEAKHIEAVEAKQIEAEEAQRIKAGEAKQIEAGETSRSSRKVITFEPKLVINKGISVLGFVLRLFAVFGTIGSALAMGTTHESVVSLSQLVLLKVKYSDLPTLMFFVVANAIAGGYLVLSLPVSIFHIFSTKAKTSRIILLVIDTVMLALVSSGASAATATVYLAHEGNTTANWPPICQQFDGFCERISGSLIGSFCAVILLMLIVINSAISLSRH.

The Cytoplasmic portion of the chain corresponds to 1 to 57; it reads MEEAKHIEAVEAKQIEAEEAQRIKAGEAKQIEAGETSRSSRKVITFEPKLVINKGIS. Residues 58–78 form a helical membrane-spanning segment; sequence VLGFVLRLFAVFGTIGSALAM. At 79 to 103 the chain is on the extracellular side; that stretch reads GTTHESVVSLSQLVLLKVKYSDLPT. A helical membrane pass occupies residues 104 to 124; sequence LMFFVVANAIAGGYLVLSLPV. Residues 125–138 are Cytoplasmic-facing; the sequence is SIFHIFSTKAKTSR. Residues 139–159 form a helical membrane-spanning segment; the sequence is IILLVIDTVMLALVSSGASAA. The Extracellular portion of the chain corresponds to 160–191; that stretch reads TATVYLAHEGNTTANWPPICQQFDGFCERISG. Asparagine 170 carries N-linked (GlcNAc...) asparagine glycosylation. A helical membrane pass occupies residues 192 to 212; it reads SLIGSFCAVILLMLIVINSAI. Residues 213-217 lie on the Cytoplasmic side of the membrane; that stretch reads SLSRH.

This sequence belongs to the Casparian strip membrane proteins (CASP) family. Homodimer and heterodimers.

Its subcellular location is the cell membrane. Regulates membrane-cell wall junctions and localized cell wall deposition. Required for establishment of the Casparian strip membrane domain (CSD) and the subsequent formation of Casparian strips, a cell wall modification of the root endodermis that determines an apoplastic barrier between the intraorganismal apoplasm and the extraorganismal apoplasm and prevents lateral diffusion. The sequence is that of Casparian strip membrane protein 6 from Arabidopsis lyrata subsp. lyrata (Lyre-leaved rock-cress).